A 334-amino-acid polypeptide reads, in one-letter code: MRIEEFDYELPEELIAKYPAVPRHSARLMVLNRKDQSIKHDTFINLPDYLEEGDLLVFNNTKVIPARLYGRKPTGGRVEVVLTDFIKPDEWKALIGGKKIRPGLVIEVAPDFKVEVLEHIEEGKFRVKLLGEEPLKLIDKYGHIPIPPYLKREEEPIDRVYYQTIFAKEKGAVASPTASLHFSEELLEKLKEKGINFAFITLHVSYGTFKPVKVERVEEHRVDPEYVKIPKETVEKIKETKEKGKRVVAVGTTVVRALETKPFEPFEGWTDLYIYPGFKFKVVDAMITNFHLPRSSLLILVSAFAGREFILKAYREAVEKRYRFYSYGDGMLIL.

Belongs to the QueA family. As to quaternary structure, monomer.

It localises to the cytoplasm. The enzyme catalyses 7-aminomethyl-7-carbaguanosine(34) in tRNA + S-adenosyl-L-methionine = epoxyqueuosine(34) in tRNA + adenine + L-methionine + 2 H(+). It participates in tRNA modification; tRNA-queuosine biosynthesis. In terms of biological role, transfers and isomerizes the ribose moiety from AdoMet to the 7-aminomethyl group of 7-deazaguanine (preQ1-tRNA) to give epoxyqueuosine (oQ-tRNA). The sequence is that of S-adenosylmethionine:tRNA ribosyltransferase-isomerase from Aquifex aeolicus (strain VF5).